A 129-amino-acid polypeptide reads, in one-letter code: Large ribosomal subunit protein bL12c (129 aa).

It belongs to the bacterial ribosomal protein bL12 family. As to quaternary structure, homodimer. Part of the ribosomal stalk of the 50S ribosomal subunit. Forms a multimeric L10(L12)X complex, where L10 forms an elongated spine to which 2 to 4 L12 dimers bind in a sequential fashion. Binds GTP-bound translation factors.

It is found in the plastid. The protein resides in the chloroplast. Forms part of the ribosomal stalk which helps the ribosome interact with GTP-bound translation factors. Is thus essential for accurate translation. This is Large ribosomal subunit protein bL12c from Porphyra purpurea (Red seaweed).